The primary structure comprises 232 residues: Large ribosomal subunit protein uL1 (232 aa).

It belongs to the universal ribosomal protein uL1 family. As to quaternary structure, part of the 50S ribosomal subunit.

Binds directly to 23S rRNA. The L1 stalk is quite mobile in the ribosome, and is involved in E site tRNA release. In terms of biological role, protein L1 is also a translational repressor protein, it controls the translation of the L11 operon by binding to its mRNA. This chain is Large ribosomal subunit protein uL1, found in Coxiella burnetii (strain CbuK_Q154) (Coxiella burnetii (strain Q154)).